The sequence spans 396 residues: MAGVNVGDDKLVFESSEAVTVAPTFEALNLKEDLLRGIYAYNFEKPSAIQQRAIIPIIRGRDVIAQAQSGTGKTATFSISMLQSIDTNLRETQALVLSPTRELAVQIQTVVLALGDYMNVSCHACIGGTSVGEDIRKLEAGQQVVSGTPGRVFDMIRRRNLRTKDIKMLILDESDELLNKGFKDQIYDIYRYLPPATQVVVVSATLPHDVLEMTTKFMTDPVRILVKRDELTLEGIKQFFVAVEKEDWKFDTLCDLYDTLTITQAVIFCNTRRKVDWLTEKMREANFTVSSMHGEMVQKERDAIMAEFRGGQSRVLITTDVWARGIDVQQVSLVINYDLPTSRENYLHRIGRSGRFGRKGVAINFVTVDDVRILRDIEQYYSTQIDEMPMNVAELT.

A Q motif motif is present at residues 23-51; the sequence is PTFEALNLKEDLLRGIYAYNFEKPSAIQQ. The Helicase ATP-binding domain occupies 54-224; that stretch reads IIPIIRGRDV…TKFMTDPVRI (171 aa). An ATP-binding site is contributed by 67 to 74; that stretch reads AQSGTGKT. A DEAD box motif is present at residues 172-175; sequence DESD. One can recognise a Helicase C-terminal domain in the interval 235–396; that stretch reads GIKQFFVAVE…EMPMNVAELT (162 aa).

This sequence belongs to the DEAD box helicase family. DDX48/FAL1 subfamily.

It is found in the nucleus. It localises to the nucleolus. The enzyme catalyses ATP + H2O = ADP + phosphate + H(+). ATP-dependent RNA helicase involved in 40S ribosomal subunit biogenesis. Required for the processing and cleavage of 35S pre-rRNA at sites A0, A1, and A2, leading to mature 18S rRNA. In Cryptococcus neoformans var. neoformans serotype D (strain B-3501A) (Filobasidiella neoformans), this protein is ATP-dependent RNA helicase FAL1 (FAL1).